We begin with the raw amino-acid sequence, 413 residues long: MTMLRVRSRDGLERVSVDGPHITVSQLKTLIQDQLQIPIHNQTLSTNRNLLLAKSPSDFLAFTDMADPNLRISSLNLAHGSMVYLAYEGERTIRGGPAVTPAGSFGRKMTVEDLIARQMRVGRQEKAHCDSVSFDRDCANAFQHFVNESLAFAVKRGGFMYGNVSEDGQVEVNFIYEPPQQGMEDNLILMRDSEEEKRVDAIALGLGMRRVGFIFNQTVTQDKKEYTLSNVEVLLAAQLHAESELKEWVTAVVKLEINEDGGADVHFEPFQMSDMCVRLFKEGWFETEIGPEDDPKLSKLKKEVVVGVKDVKEVDNDFFLVLVKILDHQGPLSCTFPIENRNTQTTMRALKTHMERARSLPFVKRISDFHLLLFVAQFLDVSSDVPALAECVRLQSHVPEGYELLIDSMANTS.

A Phosphoserine modification is found at S104. The region spanning 131–272 (SVSFDRDCAN…ADVHFEPFQM (142 aa)) is the MPN domain.

Belongs to the NPL4 family.

It functions in the pathway protein degradation; proteasomal ubiquitin-dependent pathway. Its function is as follows. May be part of a complex that binds ubiquitinated proteins and that is necessary for the export of misfolded proteins from the ER to the cytoplasm, where they are degraded by the proteasome. This Arabidopsis thaliana (Mouse-ear cress) protein is NPL4-like protein 1.